A 134-amino-acid polypeptide reads, in one-letter code: Cytochrome b5 (134 aa).

Residue Ala-2 is modified to N-acetylalanine. An N6-acetyllysine mark is found at Lys-7, Lys-10, and Lys-19. Residues 9–85 enclose the Cytochrome b5 heme-binding domain; sequence VKYYTLEEIQ…SKTYIIGELH (77 aa). Heme is bound by residues His-44 and His-68. A helical membrane pass occupies residues 109-131; that stretch reads WWTNWVIPAISALAVALMYRLYM.

It belongs to the cytochrome b5 family.

It localises to the endoplasmic reticulum membrane. The protein resides in the microsome membrane. Functionally, cytochrome b5 is a membrane-bound hemoprotein functioning as an electron carrier for several membrane-bound oxygenases. It is also involved in several steps of the sterol biosynthesis pathway, particularly in the C-5 double bond introduction during the C-5 desaturation. The chain is Cytochrome b5 (Cyb5a) from Mus musculus (Mouse).